The following is an 83-amino-acid chain: Small ribosomal subunit protein bS16 (83 aa).

This sequence belongs to the bacterial ribosomal protein bS16 family.

The sequence is that of Small ribosomal subunit protein bS16 from Acinetobacter baumannii (strain AB307-0294).